Reading from the N-terminus, the 213-residue chain is Uridine kinase (213 aa).

14–21 is a binding site for ATP; that stretch reads GASASGKS.

Belongs to the uridine kinase family.

The protein resides in the cytoplasm. The enzyme catalyses uridine + ATP = UMP + ADP + H(+). The catalysed reaction is cytidine + ATP = CMP + ADP + H(+). It participates in pyrimidine metabolism; CTP biosynthesis via salvage pathway; CTP from cytidine: step 1/3. It functions in the pathway pyrimidine metabolism; UMP biosynthesis via salvage pathway; UMP from uridine: step 1/1. This is Uridine kinase from Vibrio campbellii (strain ATCC BAA-1116).